The chain runs to 494 residues: V-type proton ATPase subunit B (494 aa).

Arg384 is a binding site for ATP.

The protein belongs to the ATPase alpha/beta chains family. As to quaternary structure, V-ATPase is a heteromultimeric enzyme made up of two complexes: the ATP-hydrolytic V1 complex and the proton translocation V0 complex. The V1 complex consists of three catalytic AB heterodimers that form a heterohexamer, three peripheral stalks each consisting of EG heterodimers, one central rotor including subunits D and F, and the regulatory subunits C and H. The proton translocation complex V0 consists of the proton transport subunit a, a ring of proteolipid subunits c9c'', rotary subunit d, subunits e and f, and the accessory subunits VhaAC45 and ATP6AP2.

Non-catalytic subunit of the V1 complex of vacuolar(H+)-ATPase (V-ATPase), a multisubunit enzyme composed of a peripheral complex (V1) that hydrolyzes ATP and a membrane integral complex (V0) that translocates protons. V-ATPase is responsible for acidifying and maintaining the pH of intracellular compartments and in some cell types, is targeted to the plasma membrane, where it is responsible for acidifying the extracellular environment. Essential for the proper assembly and activity of V-ATPase. This chain is V-type proton ATPase subunit B (VHA55), found in Manduca sexta (Tobacco hawkmoth).